The following is a 290-amino-acid chain: Ribosomal protein L11 methyltransferase (290 aa).

S-adenosyl-L-methionine-binding residues include T136, G157, D179, and N222.

This sequence belongs to the methyltransferase superfamily. PrmA family.

It is found in the cytoplasm. It carries out the reaction L-lysyl-[protein] + 3 S-adenosyl-L-methionine = N(6),N(6),N(6)-trimethyl-L-lysyl-[protein] + 3 S-adenosyl-L-homocysteine + 3 H(+). Methylates ribosomal protein L11. This chain is Ribosomal protein L11 methyltransferase, found in Porphyromonas gingivalis (strain ATCC BAA-308 / W83).